Here is a 445-residue protein sequence, read N- to C-terminus: NADH-quinone oxidoreductase subunit F (445 aa).

Gly61–Gly70 serves as a coordination point for NAD(+). Gly174 to Thr221 contributes to the FMN binding site. Residues Cys351, Cys354, Cys357, and Cys398 each contribute to the [4Fe-4S] cluster site.

Belongs to the complex I 51 kDa subunit family. In terms of assembly, composed of 13 different subunits. Subunits NuoCD, E, F, and G constitute the peripheral sector of the complex. Requires FMN as cofactor. [4Fe-4S] cluster serves as cofactor.

It carries out the reaction a quinone + NADH + 5 H(+)(in) = a quinol + NAD(+) + 4 H(+)(out). Its function is as follows. NDH-1 shuttles electrons from NADH, via FMN and iron-sulfur (Fe-S) centers, to quinones in the respiratory chain. The immediate electron acceptor for the enzyme in this species is believed to be ubiquinone. Couples the redox reaction to proton translocation (for every two electrons transferred, four hydrogen ions are translocated across the cytoplasmic membrane), and thus conserves the redox energy in a proton gradient. This is NADH-quinone oxidoreductase subunit F (nuoF) from Salmonella typhimurium (strain LT2 / SGSC1412 / ATCC 700720).